We begin with the raw amino-acid sequence, 330 residues long: MEFYASLKSIAMHVPSERVKNAEFQQFLDTSDEWIEKRTGIKERRFASNEEKSSDLGVIAAKQAIERAHLTPKDIDLVVVATLSPDFLAMPSTACVLSAKLGIENKPAFDISAACTGFIYLLSVAKAYVESGMCENVLIVGAEKTSSVLDFKDRGTCILFGDGAGACVIGRTKRLKESILDVQISANGNFSNYLYTPRTLKPTPFNAKEEALEPFLCMKGNEVFKLAVKTLLKDVEMILEKNALKPEDVRLFIPHQANFRIIQAVREHLDFKDEQVVLTVHKYGNTSAASIPMAMGEAYEEGRLKKGDLMLLDAFGGGLTWGSALVYFGG.

Residues cysteine 115 and histidine 255 contribute to the active site. The tract at residues 256 to 260 (QANFR) is ACP-binding. The active site involves asparagine 285.

This sequence belongs to the thiolase-like superfamily. FabH family. As to quaternary structure, homodimer.

It localises to the cytoplasm. It carries out the reaction malonyl-[ACP] + acetyl-CoA + H(+) = 3-oxobutanoyl-[ACP] + CO2 + CoA. It participates in lipid metabolism; fatty acid biosynthesis. In terms of biological role, catalyzes the condensation reaction of fatty acid synthesis by the addition to an acyl acceptor of two carbons from malonyl-ACP. Catalyzes the first condensation reaction which initiates fatty acid synthesis and may therefore play a role in governing the total rate of fatty acid production. Possesses both acetoacetyl-ACP synthase and acetyl transacylase activities. Its substrate specificity determines the biosynthesis of branched-chain and/or straight-chain of fatty acids. The protein is Beta-ketoacyl-[acyl-carrier-protein] synthase III of Helicobacter pylori (strain G27).